The primary structure comprises 836 residues: ATP-binding cassette sub-family B member 6 (836 aa).

Over 1 to 26 (MVTVGNYCEAEGPAGPAWTQNGLSPC) the chain is Lumenal. Residues 1–205 (MVTVGNYCEA…SGGLFILGLW (205 aa)) form a required for the lysosomal targeting region. The tract at residues 1-236 (MVTVGNYCEA…RNQGRSTDPR (236 aa)) is required for ATPase activity. A disulfide bond links Cys-8 and Cys-26. The chain crosses the membrane as a helical span at residues 27–47 (FFYTLVPSTLMTLGVLALVLV). Over 48–72 (LPCRRREVPAGTEELSWAAGPRVAP) the chain is Cytoplasmic. The chain crosses the membrane as a helical span at residues 73–93 (YALQLSLAILQMALPLASLAG). At 94–106 (RVGTARGVRLPGY) the chain is on the lumenal side. A helical membrane pass occupies residues 107-127 (LLLASVLESLASACGLWLLVV). Residues 128 to 147 (ERSQARQSLAMGVWMKFRHS) are Cytoplasmic-facing. A helical membrane pass occupies residues 148–168 (LGLLLLWTVTFAAENLVLVSW). At 169–185 (NSPQWWWSRADLGQQVQ) the chain is on the lumenal side. A helical transmembrane segment spans residues 186–206 (FGLWVLRYMTSGGLFILGLWA). The Cytoplasmic segment spans residues 207-264 (PGLRPQSYTLHVNEEDQDGGRNQGRSTDPRSTWRDLGRKLRLLSGYLWPRGSPSLQLT). The helical transmembrane segment at 265 to 285 (VLLCMGLMGLDRALNVLVPIF) threads the bilayer. One can recognise an ABC transmembrane type-1 domain in the interval 265–556 (VLLCMGLMGL…FGTYYRMIQT (292 aa)). The Lumenal segment spans residues 286–305 (YRDIVNLLTSKAPWSSLAWT). The chain crosses the membrane as a helical span at residues 306–326 (VTTYVFLKFLQGGGTGSTGFV). The Cytoplasmic portion of the chain corresponds to 327–375 (SNLRTFLWIRVQQFTSRGVELRLFSHLHELSLRWHLGRRTGEVLRIVDR). The chain crosses the membrane as a helical span at residues 376-396 (GTSSVTGLLSYLVFNIIPTLA). Position 397 (Asp-397) is a topological domain, lumenal. The helical transmembrane segment at 398-418 (IIIGIIYFSMFFNAWFGLIVF) threads the bilayer. The Cytoplasmic segment spans residues 419-499 (LCMSLYLILT…STASLVLLNQ (81 aa)). Residues 500–520 (TQNMVIGFGLLAGSLLCAYFV) traverse the membrane as a helical segment. Topologically, residues 521–529 (SERRLQVGD) are lumenal. The helical transmembrane segment at 530–550 (FVLFGTYITQLYMPLNWFGTY) threads the bilayer. Residues 551-836 (YRMIQTNFID…QGQETVPEDS (286 aa)) lie on the Cytoplasmic side of the membrane. Positions 590–824 (VEFENVHFSY…GGVYAEMWQL (235 aa)) constitute an ABC transporter domain. ATP contacts are provided by residues Tyr-599 and 623-634 (GPSGAGKSTILR).

The protein belongs to the ABC transporter superfamily. ABCB family. Heavy Metal importer (TC 3.A.1.210) subfamily. In terms of assembly, homodimer. In terms of processing, N-glycosylated. In terms of tissue distribution, ubiquitously expressed. Highly expressed in testis by meiotic pachytene spermatocytes and post-meiotic early spermatids.

The protein resides in the cell membrane. Its subcellular location is the mitochondrion outer membrane. The protein localises to the endoplasmic reticulum membrane. It localises to the golgi apparatus membrane. It is found in the endosome membrane. The protein resides in the lysosome membrane. Its subcellular location is the late endosome membrane. The protein localises to the early endosome membrane. It localises to the secreted. It is found in the extracellular exosome. The protein resides in the mitochondrion. Its subcellular location is the endosome. The protein localises to the multivesicular body membrane. It localises to the melanosome membrane. The enzyme catalyses heme b(in) + ATP + H2O = heme b(out) + ADP + phosphate + H(+). The catalysed reaction is coproporphyrin III(in) + ATP + H2O = coproporphyrin III(out) + ADP + phosphate + H(+). It carries out the reaction pheophorbide a(in) + ATP + H2O = pheophorbide a(out) + ADP + phosphate + H(+). It catalyses the reaction coproporphyrinogen III(in) + ATP + H2O = coproporphyrinogen III(out) + ADP + phosphate + H(+). The enzyme catalyses protoporphyrin IX(in) + ATP + H2O = protoporphyrin IX(out) + ADP + phosphate + H(+). The catalysed reaction is coproporphyrin I(in) + ATP + H2O = coproporphyrin I(out) + ADP + phosphate + H(+). It carries out the reaction uroporphyrin I(in) + ATP + H2O = uroporphyrin I(out) + ADP + phosphate + H(+). It catalyses the reaction uroporphyrin III(in) + ATP + H2O = uroporphyrin III(out) + ADP + phosphate + H(+). Functionally, ATP-dependent transporter that catalyzes the transport of a broad-spectrum of porphyrins from the cytoplasm to the extracellular space through the plasma membrane or into the vesicle lumen. May also function as an ATP-dependent importer of porphyrins from the cytoplasm into the mitochondria, in turn may participate in the de novo heme biosynthesis regulation and in the coordination of heme and iron homeostasis during phenylhydrazine stress. May play a key role in the early steps of melanogenesis producing PMEL amyloid fibrils. In vitro, it confers to cells a resistance to toxic metal such as arsenic and cadmium and against chemotherapeutics agent such as 5-fluorouracil, SN-38 and vincristin. In addition may play a role in the transition metal homeostasis. The protein is ATP-binding cassette sub-family B member 6 of Rattus norvegicus (Rat).